Here is a 118-residue protein sequence, read N- to C-terminus: Na(+)/H(+) antiporter subunit G1 (118 aa).

3 helical membrane-spanning segments follow: residues 9 to 29 (VSIIFVVLGALISAFAATGLI), 47 to 67 (LGAMFLLFGAFLYFIGTEGYV), and 69 to 89 (MQLIIGIIFVFITGPLSSHLI).

It belongs to the CPA3 antiporters (TC 2.A.63) subunit G family. May form a heterooligomeric complex that consists of seven subunits: mnhA1, mnhB1, mnhC1, mnhD1, mnhE1, mnhF1 and mnhG1.

The protein localises to the cell membrane. Functionally, mnh complex is a Na(+)/H(+) antiporter involved in Na(+) excretion. In Staphylococcus epidermidis (strain ATCC 35984 / DSM 28319 / BCRC 17069 / CCUG 31568 / BM 3577 / RP62A), this protein is Na(+)/H(+) antiporter subunit G1 (mnhG1).